A 419-amino-acid polypeptide reads, in one-letter code: MTTQLEQAWELAKQRFAAVGVDVEEALRQLDRLPVSMHCWQGDDVAGFENTGAALTGGIQATGNYPGKARNATELRADLELALSLIPGPKRLNLHAIYHEAPEPVGRNEIKPEHFKNWVEWAKANKLGLDFNPSCFSHPLSADGFTLSHADDEIRQFWIDHVKASRRVSAYFGEQLGTPSVMNIWIPDGMKDITVDRLAPRQRLLAALDEIISEKINPAHHIDAVESKLFGIGAESYTVGSNEFYMGYATSRQTALCLDAGHFHPTEVISDKISAAMLYVPRLLLHVSRPVRWDSDHVVLLDDETQAIASEIIRHDLFDRVHIGLDFFDASINRIAAWVIGTRNMKKALLRALLEPTAALKQLEENGDYTARLALLEEQKSLPWQAIWEMYCQRNDAPAGSQWLDNVRAYEKEVLSQRG.

Mn(2+)-binding residues include histidine 262, aspartate 294, and aspartate 296.

This sequence belongs to the rhamnose isomerase family. Homotetramer. Requires Mn(2+) as cofactor.

The protein resides in the cytoplasm. The enzyme catalyses L-rhamnopyranose = L-rhamnulose. It functions in the pathway carbohydrate degradation; L-rhamnose degradation; glycerone phosphate from L-rhamnose: step 1/3. Its function is as follows. Catalyzes the interconversion of L-rhamnose and L-rhamnulose. This Enterobacter sp. (strain 638) protein is L-rhamnose isomerase.